Reading from the N-terminus, the 261-residue chain is Cytochrome c oxidase subunit 3 (261 aa).

Over 1 to 15 (MTHQLHQYHLVDPSP) the chain is Mitochondrial matrix. The helical transmembrane segment at 16 to 34 (WPLTGAMGSLLLASGLAVW) threads the bilayer. The Mitochondrial intermembrane segment spans residues 35-40 (FHTNNT). The helical transmembrane segment at 41–66 (MLLKFGLLTLLLTMFQWWRDIIREST) threads the bilayer. Residues 67 to 72 (YQGHHT) lie on the Mitochondrial matrix side of the membrane. Residues 73-105 (SGVQKNMRYGMILFITSEVFFFLGFFWALYHVS) traverse the membrane as a helical segment. The Mitochondrial intermembrane portion of the chain corresponds to 106–128 (LVPTPELGAEWPPIGITPLNPME). Residues 129 to 152 (VPLLNTAVLLSSGATITWSHHTMM) form a helical membrane-spanning segment. The Mitochondrial matrix portion of the chain corresponds to 153–155 (KGN). Residues 156–183 (KKEATHALMLTIILGAYFTALQLSEYME) traverse the membrane as a helical segment. The Mitochondrial intermembrane segment spans residues 184-190 (TPFTIAD). Residues 191 to 223 (SVYGSLFFVATGFHGLHVMIGTSFLMVCALRLA) traverse the membrane as a helical segment. Residues 224–232 (KHHFTITHH) lie on the Mitochondrial matrix side of the membrane. Residues 233-256 (FGYEAAIWYWHFVDIVWLFLYISV) traverse the membrane as a helical segment. The Mitochondrial intermembrane segment spans residues 257 to 261 (YWWGS).

This sequence belongs to the cytochrome c oxidase subunit 3 family. Component of the cytochrome c oxidase (complex IV, CIV), a multisubunit enzyme composed of 14 subunits. The complex is composed of a catalytic core of 3 subunits MT-CO1, MT-CO2 and MT-CO3, encoded in the mitochondrial DNA, and 11 supernumerary subunits COX4I, COX5A, COX5B, COX6A, COX6B, COX6C, COX7A, COX7B, COX7C, COX8 and NDUFA4, which are encoded in the nuclear genome. The complex exists as a monomer or a dimer and forms supercomplexes (SCs) in the inner mitochondrial membrane with NADH-ubiquinone oxidoreductase (complex I, CI) and ubiquinol-cytochrome c oxidoreductase (cytochrome b-c1 complex, complex III, CIII), resulting in different assemblies (supercomplex SCI(1)III(2)IV(1) and megacomplex MCI(2)III(2)IV(2)).

The protein resides in the mitochondrion inner membrane. It catalyses the reaction 4 Fe(II)-[cytochrome c] + O2 + 8 H(+)(in) = 4 Fe(III)-[cytochrome c] + 2 H2O + 4 H(+)(out). Its function is as follows. Component of the cytochrome c oxidase, the last enzyme in the mitochondrial electron transport chain which drives oxidative phosphorylation. The respiratory chain contains 3 multisubunit complexes succinate dehydrogenase (complex II, CII), ubiquinol-cytochrome c oxidoreductase (cytochrome b-c1 complex, complex III, CIII) and cytochrome c oxidase (complex IV, CIV), that cooperate to transfer electrons derived from NADH and succinate to molecular oxygen, creating an electrochemical gradient over the inner membrane that drives transmembrane transport and the ATP synthase. Cytochrome c oxidase is the component of the respiratory chain that catalyzes the reduction of oxygen to water. Electrons originating from reduced cytochrome c in the intermembrane space (IMS) are transferred via the dinuclear copper A center (CU(A)) of subunit 2 and heme A of subunit 1 to the active site in subunit 1, a binuclear center (BNC) formed by heme A3 and copper B (CU(B)). The BNC reduces molecular oxygen to 2 water molecules using 4 electrons from cytochrome c in the IMS and 4 protons from the mitochondrial matrix. The sequence is that of Cytochrome c oxidase subunit 3 (MT-CO3) from Lycodon semicarinatus (Ryukyu odd-tooth snake).